The primary structure comprises 102 residues: MQKIRKGDNVVVLTGKDKGRTGEVIQVMPKEDRAVVRGVNMVKRHQRQTQAQEAGIINKEASLHISNIAIVDKDGKPTRVGFSVVDGKKVRVAKRSGEVIDG.

This sequence belongs to the universal ribosomal protein uL24 family. Part of the 50S ribosomal subunit.

In terms of biological role, one of two assembly initiator proteins, it binds directly to the 5'-end of the 23S rRNA, where it nucleates assembly of the 50S subunit. One of the proteins that surrounds the polypeptide exit tunnel on the outside of the subunit. The polypeptide is Large ribosomal subunit protein uL24 (Agrobacterium fabrum (strain C58 / ATCC 33970) (Agrobacterium tumefaciens (strain C58))).